A 1258-amino-acid polypeptide reads, in one-letter code: MEKYVRLQKIGEGSFGKAILVKSTEDGRQYVIKEINISRMSSKEREESRREVAVLANMKHPNIVQYRESFEENGSLYIVMDYCEGGDLFKRINAQKGVLFQEDQILDWFVQICLALKHVHDRKILHRDIKSQNIFLTKDGTVQLGDFGIARVLNSTVELARTCIGTPYYLSPEICENKPYNNKSDIWALGCVLYELCTLKHAFEAGSMKNLVLKIISGSFPPVSLHYSYDLRSLVSQLFKRNPRDRPSVNSILEKGFIAKRIEKFLSPQLIAEEFCLKTFSKFGSQPIPAKRPASGQNSISVMPAQKITKPAAKYGIPLAYKKYGDKKLHEKKPLQKHKQAHQTPEKRVNTGEERRKISEEAARKRRLEFIEKEKKQKDQIISLMKAEQMKRQEKERLERINRAREQGWRNVLSAGGSGEVKAPFLGSGGTIAPSSFSSRGQYEHYHAIFDQMQQQRAEDNEAKWKREIYGRGLPERGILPGVRPGFPYGAAGHHHFPDADDIRKTLKRLKAVSKQANANRQKGQLAVERAKQVEEFLQRKREAMQNKARAEGHMVYLARLRQIRLQNFNERQQIKAKLRGEKKEANHSEGQEGSEEADMRRKKIESLKAHANARAAVLKEQLERKRKEAYEREKKVWEEHLVAKGVKSSDVSPPLGQHETGGSPSKQQMRSVISVTSALKEVGVDSSLTDTRETSEEMQKTNNAISSKREILRRLNENLKAQEDEKGKQNLSDTFEINVHEDAKEHEKEKSVSSDRKKWEAGGQLVIPLDELTLDTSFSTTERHTVGEVIKLGPNGSPRRAWGKSPTDSVLKILGEAELQLQTELLENTTIRSEISPEGEKYKPLITGEKKVQCISHEINPSAIVDSPVETKSPEFSEASPQMSLKLEGNLEEPDDLETEILQEPSGTNKDESLPCTITDVWISEEKETKETQSADRITIQENEVSEDGVSSTVDQLSDIHIEPGTNDSQHSKCDVDKSVQPEPFFHKVVHSEHLNLVPQVQSVQCSPEESFAFRSHSHLPPKNKNKNSLLIGLSTGLFDANNPKMLRTCSLPDLSKLFRTLMDVPTVGDVRQDNLEIDEIEDENIKEGPSDSEDIVFEETDTDLQELQASMEQLLREQPGEEYSEEEESVLKNSDVEPTANGTDVADEDDNPSSESALNEEWHSDNSDGEIASECECDSVFNHLEELRLHLEQEMGFEKFFEVYEKIKAIHEDEDENIEICSKIVQNILGNEHQHLYAKILHLVMADGAYQEDNDE.

Residues 4–258 (YVRLQKIGEG…VNSILEKGFI (255 aa)) enclose the Protein kinase domain. ATP contacts are provided by residues 10 to 18 (IGEGSFGKA) and Lys-33. The Proton acceptor role is filled by Asp-128. Position 156 is a phosphothreonine (Thr-156). Thr-162 is modified (phosphothreonine; by autocatalysis). The disordered stretch occupies residues 330 to 360 (HEKKPLQKHKQAHQTPEKRVNTGEERRKISE). Residues 344 to 360 (TPEKRVNTGEERRKISE) are compositionally biased toward basic and acidic residues. Phosphoserine is present on residues Ser-414, Ser-418, Ser-428, and Ser-438. Disordered regions lie at residues 578–600 (KLRG…EADM), 648–669 (KSSD…SKQQ), and 685–704 (VDSS…KTNN). Residues 579–591 (LRGEKKEANHSEG) show a composition bias toward basic and acidic residues. The residue at position 653 (Ser-653) is a Phosphoserine. Thr-661 carries the post-translational modification Phosphothreonine. Ser-664 carries the post-translational modification Phosphoserine. Over residues 691 to 700 (DTRETSEEMQ) the composition is skewed to basic and acidic residues. Phosphoserine occurs at positions 798, 834, 868, 881, 1052, and 1126. Positions 1118–1171 (REQPGEEYSEEEESVLKNSDVEPTANGTDVADEDDNPSSESALNEEWHSDNSDG) are disordered.

This sequence belongs to the protein kinase superfamily. NEK Ser/Thr protein kinase family. NIMA subfamily. In terms of assembly, binds to CBY2. Found in a complex with CFAP410, NEK1 and SPATA7. Interacts with CFAP410. Interacts (via Ser-1052 phosphorylated form) with 14-3-3 proteins. It depends on Mg(2+) as a cofactor. In terms of tissue distribution, high fetal expression in the brain and kidney.

It localises to the nucleus. Its subcellular location is the cytoplasm. It is found in the cytoskeleton. The protein localises to the microtubule organizing center. The protein resides in the centrosome. It carries out the reaction L-seryl-[protein] + ATP = O-phospho-L-seryl-[protein] + ADP + H(+). The catalysed reaction is L-threonyl-[protein] + ATP = O-phospho-L-threonyl-[protein] + ADP + H(+). Its function is as follows. Phosphorylates serines and threonines, but also appears to possess tyrosine kinase activity. Involved in DNA damage checkpoint control and for proper DNA damage repair. In response to injury that includes DNA damage, NEK1 phosphorylates VDAC1 to limit mitochondrial cell death. May be implicated in the control of meiosis. Involved in cilium assembly. This chain is Serine/threonine-protein kinase Nek1 (NEK1), found in Homo sapiens (Human).